The chain runs to 425 residues: Light-independent protochlorophyllide reductase subunit N (425 aa).

C17, C42, and C103 together coordinate [4Fe-4S] cluster.

This sequence belongs to the BchN/ChlN family. As to quaternary structure, protochlorophyllide reductase is composed of three subunits; ChlL, ChlN and ChlB. Forms a heterotetramer of two ChlB and two ChlN subunits. The cofactor is [4Fe-4S] cluster.

The enzyme catalyses chlorophyllide a + oxidized 2[4Fe-4S]-[ferredoxin] + 2 ADP + 2 phosphate = protochlorophyllide a + reduced 2[4Fe-4S]-[ferredoxin] + 2 ATP + 2 H2O. The protein operates within porphyrin-containing compound metabolism; chlorophyll biosynthesis (light-independent). In terms of biological role, component of the dark-operative protochlorophyllide reductase (DPOR) that uses Mg-ATP and reduced ferredoxin to reduce ring D of protochlorophyllide (Pchlide) to form chlorophyllide a (Chlide). This reaction is light-independent. The NB-protein (ChlN-ChlB) is the catalytic component of the complex. In Parasynechococcus marenigrum (strain WH8102), this protein is Light-independent protochlorophyllide reductase subunit N.